We begin with the raw amino-acid sequence, 463 residues long: Fumarate hydratase class II (463 aa).

Substrate contacts are provided by residues 98 to 100, 129 to 132, 139 to 141, and Thr187; these read SGT, HPND, and SSN. The segment at 121–141 is disordered; sequence KKGGKSPVHPNDHVNKGQSSN. His188 serves as the catalytic Proton donor/acceptor. Residue Ser318 is part of the active site. Substrate contacts are provided by residues Ser319 and 324–326; that span reads KVN.

It belongs to the class-II fumarase/aspartase family. Fumarase subfamily. As to quaternary structure, homotetramer.

The protein localises to the cytoplasm. It catalyses the reaction (S)-malate = fumarate + H2O. It functions in the pathway carbohydrate metabolism; tricarboxylic acid cycle; (S)-malate from fumarate: step 1/1. In terms of biological role, involved in the TCA cycle. Catalyzes the stereospecific interconversion of fumarate to L-malate. This Rickettsia conorii (strain ATCC VR-613 / Malish 7) protein is Fumarate hydratase class II.